The primary structure comprises 252 residues: Cell division protein ZapD (252 aa).

It belongs to the ZapD family. Interacts with FtsZ.

It is found in the cytoplasm. In terms of biological role, cell division factor that enhances FtsZ-ring assembly. Directly interacts with FtsZ and promotes bundling of FtsZ protofilaments, with a reduction in FtsZ GTPase activity. This Cupriavidus metallidurans (strain ATCC 43123 / DSM 2839 / NBRC 102507 / CH34) (Ralstonia metallidurans) protein is Cell division protein ZapD.